We begin with the raw amino-acid sequence, 434 residues long: MAKTDLARRVYNHTWKLDPIIRSLLDTDFYKLLMLQMIWGLYPRVDATFSLINRTSSVRLADEIDEGELRAQLDHARTLRFSKKEMIWLAGNTFYGRKQIFQPEFLAWLHDFHLPEYELRRKDGQYELHFHGPWTHTTMWEIPALAIINELRSRAAMKNLGPFSLDVLYARAKAKMWSKVERLRQLPDLKISDFGTRRRHSFLWQRWCVEALKEGIGSAFTGTSNVLLAMDTDLEALGTNAHELPMVLAALAKTDDELRSAPYRVLQDWNRYYGGNLLIVLPDAFGTAAFLRNAPDWVADWTGFRPDSAPPIEGGERIIEWWKSKGKDPREKLLIFSDALDVDTIEETYRHFEGRVRMGFGWGTNLTNDFAGCAPQSIDGLKAISLVCKVTDANGHPAVKLSDNPQKATGDPKEVARYLRFFGNEERVEQLVRV.

A Phosphohistidine; by autocatalysis modification is found at His-242.

The protein belongs to the NAPRTase family. Post-translationally, transiently phosphorylated on a His residue during the reaction cycle. Phosphorylation strongly increases the affinity for substrates and increases the rate of nicotinate D-ribonucleotide production. Dephosphorylation regenerates the low-affinity form of the enzyme, leading to product release.

The enzyme catalyses nicotinate + 5-phospho-alpha-D-ribose 1-diphosphate + ATP + H2O = nicotinate beta-D-ribonucleotide + ADP + phosphate + diphosphate. The protein operates within cofactor biosynthesis; NAD(+) biosynthesis; nicotinate D-ribonucleotide from nicotinate: step 1/1. Functionally, catalyzes the synthesis of beta-nicotinate D-ribonucleotide from nicotinate and 5-phospho-D-ribose 1-phosphate at the expense of ATP. The polypeptide is Nicotinate phosphoribosyltransferase (Brucella canis (strain ATCC 23365 / NCTC 10854 / RM-666)).